A 399-amino-acid chain; its full sequence is Paraneoplastic antigen-like protein 6A (399 aa).

The protein belongs to the PNMA family. In terms of tissue distribution, expressed in the brain.

This is Paraneoplastic antigen-like protein 6A from Homo sapiens (Human).